Reading from the N-terminus, the 148-residue chain is SsrA-binding protein (148 aa).

The disordered stretch occupies residues 119-148; the sequence is AKGKKQHDKRETEKKRDWEREKARLMRSPG. Residues 126–142 show a composition bias toward basic and acidic residues; the sequence is DKRETEKKRDWEREKAR.

It belongs to the SmpB family.

The protein localises to the cytoplasm. Required for rescue of stalled ribosomes mediated by trans-translation. Binds to transfer-messenger RNA (tmRNA), required for stable association of tmRNA with ribosomes. tmRNA and SmpB together mimic tRNA shape, replacing the anticodon stem-loop with SmpB. tmRNA is encoded by the ssrA gene; the 2 termini fold to resemble tRNA(Ala) and it encodes a 'tag peptide', a short internal open reading frame. During trans-translation Ala-aminoacylated tmRNA acts like a tRNA, entering the A-site of stalled ribosomes, displacing the stalled mRNA. The ribosome then switches to translate the ORF on the tmRNA; the nascent peptide is terminated with the 'tag peptide' encoded by the tmRNA and targeted for degradation. The ribosome is freed to recommence translation, which seems to be the essential function of trans-translation. This is SsrA-binding protein from Paraburkholderia xenovorans (strain LB400).